Here is a 224-residue protein sequence, read N- to C-terminus: 7-cyano-7-deazaguanine synthase (224 aa).

Residue 12–22 (LSGGLDSSTVT) participates in ATP binding. Residues C193, C201, C204, and C207 each contribute to the Zn(2+) site.

The protein belongs to the QueC family. The cofactor is Zn(2+).

It catalyses the reaction 7-carboxy-7-deazaguanine + NH4(+) + ATP = 7-cyano-7-deazaguanine + ADP + phosphate + H2O + H(+). It participates in purine metabolism; 7-cyano-7-deazaguanine biosynthesis. Its function is as follows. Catalyzes the ATP-dependent conversion of 7-carboxy-7-deazaguanine (CDG) to 7-cyano-7-deazaguanine (preQ(0)). The sequence is that of 7-cyano-7-deazaguanine synthase from Prochlorococcus marinus (strain AS9601).